Reading from the N-terminus, the 249-residue chain is MGTPEFPDLGKHCSVDYCKQIDFLPFTCDRCLQVYCLDHRSYMKHDCPKGNRGDVTVVICPLCAKGVRLNPDEDPNITWEKHVNTDCDPSNYEKAVKKKKCPVPRCRELLTFSNTIKCRDCSIDHCLKHRFGPDHSCSGPKKPESSFSFMGFLSTNTKEAPASSSSSSRWSSLFASAEASISRLGNDISQKLQFASGNDGNSEKTQERNGKQNCGKVTVDVCPKCSRGFRDPVDLLKHIDKDHRGTSKA.

2 consecutive AN1-type zinc fingers follow at residues 7–55 (PDLG…RGDV) and 95–145 (AVKK…KPES). Positions 13, 18, 28, 31, 36, 39, 45, 47, 101, 106, 118, 121, 126, 129, 135, and 137 each coordinate Zn(2+). The segment at 194–213 (FASGNDGNSEKTQERNGKQN) is disordered. A compositionally biased stretch (basic and acidic residues) spans 201 to 210 (NSEKTQERNG). The C2H2-type zinc-finger motif lies at 220–243 (DVCPKCSRGFRDPVDLLKHIDKDH).

Functionally, may be involved in environmental stress response. This Arabidopsis thaliana (Mouse-ear cress) protein is Zinc finger AN1 and C2H2 domain-containing stress-associated protein 13 (SAP13).